The following is a 291-amino-acid chain: ATP synthase gamma chain (291 aa).

Belongs to the ATPase gamma chain family. As to quaternary structure, F-type ATPases have 2 components, CF(1) - the catalytic core - and CF(0) - the membrane proton channel. CF(1) has five subunits: alpha(3), beta(3), gamma(1), delta(1), epsilon(1). CF(0) has three main subunits: a, b and c.

The protein localises to the cell inner membrane. Functionally, produces ATP from ADP in the presence of a proton gradient across the membrane. The gamma chain is believed to be important in regulating ATPase activity and the flow of protons through the CF(0) complex. This is ATP synthase gamma chain from Ralstonia nicotianae (strain ATCC BAA-1114 / GMI1000) (Ralstonia solanacearum).